Here is a 708-residue protein sequence, read N- to C-terminus: Wall-associated receptor kinase-like 14 (708 aa).

The signal sequence occupies residues 1 to 42 (MLRSIFDFNQRSTKMVMISHKLDLILVFIIVIGGSIFRRVSA). Residues Asn-43, Asn-88, Asn-101, Asn-131, Asn-158, Asn-167, and Asn-184 are each glycosylated (N-linked (GlcNAc...) asparagine). At 43-285 (NFTVPCNGRC…WRHCRSNLIT (243 aa)) the chain is on the extracellular side. A helical transmembrane segment spans residues 286 to 306 (IVGGTVGGAFLLAALAFFFFC). At 307–708 (KRRRSTPLRS…TNTLLGNIPR (402 aa)) the chain is on the cytoplasmic side. One can recognise a Protein kinase domain in the interval 348 to 629 (FSEKQKLGIG…LEQIRLSGWI (282 aa)). Residues 354-362 (LGIGAYGTV) and Lys-376 each bind ATP. Asp-472 acts as the Proton acceptor in catalysis. 2 disordered regions span residues 636–659 (SPAG…SIGS) and 686–708 (VQDP…NIPR). Residues 643-652 (SSDRGSERSV) are compositionally biased toward basic and acidic residues. The span at 692 to 708 (SAQSSPSTNTLLGNIPR) shows a compositional bias: polar residues.

This sequence belongs to the protein kinase superfamily. Ser/Thr protein kinase family.

The protein localises to the membrane. The catalysed reaction is L-seryl-[protein] + ATP = O-phospho-L-seryl-[protein] + ADP + H(+). It catalyses the reaction L-threonyl-[protein] + ATP = O-phospho-L-threonyl-[protein] + ADP + H(+). Serine/threonine-protein kinase that may function as a signaling receptor of extracellular matrix component. The polypeptide is Wall-associated receptor kinase-like 14 (WAKL14) (Arabidopsis thaliana (Mouse-ear cress)).